Consider the following 108-residue polypeptide: Small ribosomal subunit protein eS25w (108 aa).

The tract at residues 1–36 is disordered; it reads MAPKKDKVPPPSSKPAKSGGGKQKKKKWSKGKQKEK. The segment covering 22–31 has biased composition (basic residues); the sequence is KQKKKKWSKG.

The protein belongs to the eukaryotic ribosomal protein eS25 family.

This is Small ribosomal subunit protein eS25w (RPS25E) from Arabidopsis thaliana (Mouse-ear cress).